The following is a 424-amino-acid chain: MNEQRFFRFLRERIGLDVESVGAPMVERALRQRCVAAGAMDLDDYWLRLQQSADEQQALIEAVIVPETWFFRYPESFTALASLAHKRLAQLAGARPLRLLSLPCSTGEEPYSLAMALFDAGMAPGAFLVDGMDISPSSVAKAGQAVYGRNAFRGSELGFRERYFDALDEGHRLHERVRQQVSLRVGNVLDPALASRDGLYDFVFCRNLLIYFDVPTQQRVFEVLKRLLHPQGVLFIGPAEGSLLARMGMRPLGIAQSFAYVRHEGDSAPLAAAPAQTAKRAFTTLPAPVYPQPSVPLPRSRRVLPVAARPARAREHSHEGASELLAGIARLANAGASEQARSECQRYLSQYPPSAQVYYWLGLLSDTEGDAQQALSHYRKALYLEPQHPEALVHLAALLAAQGDLAGARRLQERAARAGRESER.

The CheR-type methyltransferase domain maps to 1-263 (MNEQRFFRFL…IAQSFAYVRH (263 aa)). Residues Thr-68, Arg-72, Glu-109, Asp-133, 187-188 (NV), and 206-207 (RN) each bind S-adenosyl-L-methionine. The TPR repeat unit spans residues 355–388 (AQVYYWLGLLSDTEGDAQQALSHYRKALYLEPQH).

In terms of assembly, monomer. The TPR repeat does not mediate self-association.

Functionally, involved in biofilm formation. The chain is Probable biofilm formation methyltransferase WspC (wspC) from Pseudomonas putida (strain ATCC 47054 / DSM 6125 / CFBP 8728 / NCIMB 11950 / KT2440).